The following is a 295-amino-acid chain: uncharacterized protein (295 aa).

Positions 1–19 (MFRKFLFIPLLIVTSLVKA) are cleaved as a signal peptide. The tract at residues 274–295 (KRNNPPLKNNNAKSKNSYETHK) is disordered. Over residues 276-288 (NNPPLKNNNAKSK) the composition is skewed to low complexity.

This is an uncharacterized protein from Rickettsia typhi (strain ATCC VR-144 / Wilmington).